Consider the following 304-residue polypeptide: ATP phosphoribosyltransferase (304 aa).

Belongs to the ATP phosphoribosyltransferase family.

Its subcellular location is the cytoplasm. The catalysed reaction is 1-(5-phospho-beta-D-ribosyl)-ATP + diphosphate = 5-phospho-alpha-D-ribose 1-diphosphate + ATP. It participates in amino-acid biosynthesis; L-histidine biosynthesis; L-histidine from 5-phospho-alpha-D-ribose 1-diphosphate: step 1/9. Functionally, catalyzes the condensation of ATP and 5-phosphoribose 1-diphosphate to form N'-(5'-phosphoribosyl)-ATP (PR-ATP). Has a crucial role in the pathway because the rate of histidine biosynthesis seems to be controlled primarily by regulation of the enzymatic activity. The chain is ATP phosphoribosyltransferase (HIS1) from Debaryomyces hansenii (strain ATCC 36239 / CBS 767 / BCRC 21394 / JCM 1990 / NBRC 0083 / IGC 2968) (Yeast).